A 2040-amino-acid chain; its full sequence is Apolipoprotein(a) (2040 aa).

The signal sequence occupies residues 1–19 (MEHKEVVLLLLLFLKSAAP). 10 Kringle domains span residues 27-105 (DCYH…LTQC), 141-219 (ECYH…LTQC), 255-333 (ECYH…LTQC), 369-447 (ECYH…LTQC), 483-561 (ECYH…LTQC), 597-675 (ECYH…LTQC), 711-789 (ECYH…LTQC), 825-903 (ECYH…LTQC), 939-1017 (ECYH…LTRC), and 1053-1131 (DCYY…LTQC). 30 cysteine pairs are disulfide-bonded: C28-C105, C49-C88, C77-C100, C142-C219, C163-C202, C191-C214, C256-C333, C277-C316, C305-C328, C370-C447, C391-C430, C419-C442, C484-C561, C505-C544, C533-C556, C598-C675, C619-C658, C647-C670, C712-C789, C733-C772, C761-C784, C826-C903, C847-C886, C875-C898, C940-C1017, C961-C1000, C989-C1012, C1054-C1131, C1075-C1114, and C1103-C1126. N-linked (GlcNAc...) asparagine glycosylation occurs at N61. N101 is a glycosylation site (N-linked (GlcNAc...) asparagine). N-linked (GlcNAc...) asparagine glycosylation occurs at N215. N329 carries an N-linked (GlcNAc...) asparagine glycan. N443 is a glycosylation site (N-linked (GlcNAc...) asparagine). An N-linked (GlcNAc...) asparagine glycan is attached at N557. An N-linked (GlcNAc...) asparagine glycan is attached at N671. N-linked (GlcNAc...) asparagine glycosylation is present at N785. N899 carries an N-linked (GlcNAc...) asparagine glycan. N-linked (GlcNAc...) asparagine glycosylation is present at N1013. The N-linked (GlcNAc...) asparagine glycan is linked to N1127. The segment at 1147–1166 (DPSTEASSEEAPTEQSPGVQ) is disordered. Kringle domains follow at residues 1167-1245 (DCYH…LTQC) and 1273-1351 (DCYH…LTQC). Disulfide bonds link C1168-C1245, C1189-C1228, C1217-C1240, C1274-C1351, C1295-C1334, and C1323-C1346. A glycan (N-linked (GlcNAc...) asparagine) is linked at N1241. N-linked (GlcNAc...) asparagine glycans are attached at residues N1347 and N1381. Residues 1365–1388 (VPVPSTELPSEEAPTENSTGVQDC) form a disordered region. The Kringle 13 domain occupies 1387–1465 (DCYRGDGQSY…RWEYCNLTRC (79 aa)). Cystine bridges form between C1388–C1465, C1409–C1448, and C1437–C1460. N1461 is a glycosylation site (N-linked (GlcNAc...) asparagine). A disordered region spans residues 1476–1497 (PTVAPVPSTEAPSEQAPPEKSP). 3 consecutive Kringle domains span residues 1501–1579 (DCYH…LTQC), 1615–1693 (QCYH…LTRC), and 1719–1799 (DCMF…IPLC). 10 disulfides stabilise this stretch: C1502-C1579, C1523-C1562, C1551-C1574, C1616-C1693, C1637-C1676, C1665-C1688, C1720-C1799, C1741-C1782, C1770-C1794, and C1846-C1862. N1575 carries an N-linked (GlcNAc...) asparagine glycan. Residue N1689 is glycosylated (N-linked (GlcNAc...) asparagine). The Peptidase S1 domain occupies 1820 to 2038 (IVGGCVAHPH…FVTWIEGMMR (219 aa)). Active-site charge relay system residues include H1861 and D1904. 3 disulfides stabilise this stretch: C1938-C1996, C1968-C1975, and C1986-C2014. S1990 functions as the Charge relay system in the catalytic mechanism.

Belongs to the peptidase S1 family. Plasminogen subfamily. Disulfide-linked to apo-B100. Binds to fibronectin and decorin. N- and O-glycosylated. The N-glycans are complex biantennary structures present in either a mono- or disialylated state. The O-glycans are mostly (80%) represented by the monosialylated core type I structure, NeuNAcalpha2-3Galbeta1-3GalNAc, with smaller amounts of disialylated and non-sialylated O-glycans also detected.

In terms of biological role, apo(a) is the main constituent of lipoprotein(a) (Lp(a)). It has serine proteinase activity and is able of autoproteolysis. Inhibits tissue-type plasminogen activator 1. Lp(a) may be a ligand for megalin/Gp 330. The sequence is that of Apolipoprotein(a) (LPA) from Homo sapiens (Human).